The sequence spans 1831 residues: Transmembrane protein 131 homolog (1831 aa).

The N-terminal stretch at 1–29 (MVPSIHKTSNRYRTIYFFLISLLITSTFA) is a signal peptide. The Lumenal portion of the chain corresponds to 30-1169 (DQQAWPLPEE…QALPRPPFEN (1140 aa)). A papD-L domain region spans residues 118 to 294 (EMDPPMMDFG…QSKQIATLVL (177 aa)). A helical membrane pass occupies residues 1170-1190 (IMYYSCVTALIFCLVCVLACA). The Cytoplasmic segment spans residues 1191–1831 (YLEGDRAIAV…TDNENDEKNN (641 aa)). Residues 1223 to 1234 (STTTPVPTVPST) are compositionally biased toward low complexity. 4 disordered regions span residues 1223-1252 (STTTPVPTVPSTAKPESSIKKPTPATRPST), 1325-1516 (GQQK…PTDD), 1663-1759 (QMKR…VSNP), and 1800-1831 (WSSSSLFHPPTQQPSTSQMPQDTDNENDEKNN). Positions 1338–1349 (PEFDEVEEEELA) are enriched in acidic residues. Composition is skewed to low complexity over residues 1394-1407 (PIIVQPVVQSPPVQ) and 1435-1448 (QVPPVTKTPVTPKT). Positions 1455–1467 (EPEKPIKPSEQKK) are enriched in basic and acidic residues. Positions 1480 to 1497 (TPSKARTPSKTPSQSNRA) are enriched in polar residues. Low complexity predominate over residues 1500–1514 (PASSPAPIAPTSAPT). Polar residues-rich tracts occupy residues 1669–1687 (SPSQASSTLSRKLENSPQK), 1702–1733 (NQSSSSALNPNYDFTRTPGNPNRMQMSQNSIQ), and 1742–1758 (WGDNSNSDPWGTNTVSN). Positions 1808 to 1820 (PPTQQPSTSQMPQ) are enriched in low complexity. Residues 1822-1831 (TDNENDEKNN) are compositionally biased toward acidic residues.

Belongs to the TMEM131 family. In terms of assembly, may interact (via PapD-L domain) with collagen proteins (via C-terminus); the interaction is direct and is involved in assembly and secretion of collagen. In terms of tissue distribution, predominantly expressed in the intestine and hypodermis.

It is found in the membrane. It localises to the endoplasmic reticulum membrane. Its function is as follows. Collagen binding transmembrane protein involved in collagen secretion, probably by recruiting the ER-to-Golgi transport complex TRAPPIII. Required for normal development. This is Transmembrane protein 131 homolog from Caenorhabditis elegans.